A 431-amino-acid chain; its full sequence is 3-phosphoshikimate 1-carboxyvinyltransferase (431 aa).

Residues Lys20, Ser21, and Arg25 each coordinate 3-phosphoshikimate. Lys20 contributes to the phosphoenolpyruvate binding site. Phosphoenolpyruvate is bound by residues Gly91 and Arg119. Residues Ser164, Gln166, Asp317, and Lys344 each coordinate 3-phosphoshikimate. Residue Gln166 participates in phosphoenolpyruvate binding. Residue Asp317 is the Proton acceptor of the active site. Residues Arg348 and Arg390 each coordinate phosphoenolpyruvate.

The protein belongs to the EPSP synthase family. Monomer.

It is found in the cytoplasm. The catalysed reaction is 3-phosphoshikimate + phosphoenolpyruvate = 5-O-(1-carboxyvinyl)-3-phosphoshikimate + phosphate. The protein operates within metabolic intermediate biosynthesis; chorismate biosynthesis; chorismate from D-erythrose 4-phosphate and phosphoenolpyruvate: step 6/7. Its function is as follows. Catalyzes the transfer of the enolpyruvyl moiety of phosphoenolpyruvate (PEP) to the 5-hydroxyl of shikimate-3-phosphate (S3P) to produce enolpyruvyl shikimate-3-phosphate and inorganic phosphate. The chain is 3-phosphoshikimate 1-carboxyvinyltransferase from Aquifex aeolicus (strain VF5).